Consider the following 282-residue polypeptide: tRNA U34 carboxymethyltransferase (282 aa).

Residues K54, W68, K73, G92, 114–116, Y161, and R276 contribute to the carboxy-S-adenosyl-L-methionine site; that span reads DPS.

Belongs to the class I-like SAM-binding methyltransferase superfamily. CmoB family. Homotetramer.

It carries out the reaction carboxy-S-adenosyl-L-methionine + 5-hydroxyuridine(34) in tRNA = 5-carboxymethoxyuridine(34) in tRNA + S-adenosyl-L-homocysteine + H(+). Catalyzes carboxymethyl transfer from carboxy-S-adenosyl-L-methionine (Cx-SAM) to 5-hydroxyuridine (ho5U) to form 5-carboxymethoxyuridine (cmo5U) at position 34 in tRNAs. The polypeptide is tRNA U34 carboxymethyltransferase (Campylobacter fetus subsp. fetus (strain 82-40)).